A 134-amino-acid chain; its full sequence is Small ribosomal subunit protein uS9 (134 aa).

Positions 97–134 are disordered; that stretch reads ENRQDLKSCGFLTRDPRKKERKKYGHKKARKSFQFSKR. Basic residues predominate over residues 115–134; it reads KERKKYGHKKARKSFQFSKR.

The protein belongs to the universal ribosomal protein uS9 family.

The polypeptide is Small ribosomal subunit protein uS9 (rpsI) (Chlamydia pneumoniae (Chlamydophila pneumoniae)).